A 270-amino-acid chain; its full sequence is Diaminopimelate epimerase (270 aa).

The substrate site is built by asparagine 15, glutamine 49, and asparagine 66. Cysteine 75 serves as the catalytic Proton donor. Residues 76 to 77 (GN), asparagine 155, asparagine 187, and 204 to 205 (ER) contribute to the substrate site. Cysteine 213 serves as the catalytic Proton acceptor. 214-215 (GS) contributes to the substrate binding site.

It belongs to the diaminopimelate epimerase family. As to quaternary structure, homodimer.

It localises to the cytoplasm. The catalysed reaction is (2S,6S)-2,6-diaminopimelate = meso-2,6-diaminopimelate. Its pathway is amino-acid biosynthesis; L-lysine biosynthesis via DAP pathway; DL-2,6-diaminopimelate from LL-2,6-diaminopimelate: step 1/1. Catalyzes the stereoinversion of LL-2,6-diaminopimelate (L,L-DAP) to meso-diaminopimelate (meso-DAP), a precursor of L-lysine and an essential component of the bacterial peptidoglycan. The sequence is that of Diaminopimelate epimerase from Rickettsia africae (strain ESF-5).